Consider the following 32-residue polypeptide: U13-ctenitoxin-Pn1a (32 aa).

Cystine bridges form between C3/C17, C10/C21, and C16/C30.

Expressed by the venom gland.

It localises to the secreted. Its function is as follows. Acts as a neurotoxin. The sequence is that of U13-ctenitoxin-Pn1a from Phoneutria nigriventer (Brazilian armed spider).